The primary structure comprises 107 residues: Phosphoribosyl-ATP pyrophosphatase (107 aa).

This sequence belongs to the PRA-PH family.

It is found in the cytoplasm. The enzyme catalyses 1-(5-phospho-beta-D-ribosyl)-ATP + H2O = 1-(5-phospho-beta-D-ribosyl)-5'-AMP + diphosphate + H(+). Its pathway is amino-acid biosynthesis; L-histidine biosynthesis; L-histidine from 5-phospho-alpha-D-ribose 1-diphosphate: step 2/9. In Bacillus anthracis (strain A0248), this protein is Phosphoribosyl-ATP pyrophosphatase.